The sequence spans 78 residues: Exodeoxyribonuclease 7 small subunit (78 aa).

This sequence belongs to the XseB family. As to quaternary structure, heterooligomer composed of large and small subunits.

The protein localises to the cytoplasm. It carries out the reaction Exonucleolytic cleavage in either 5'- to 3'- or 3'- to 5'-direction to yield nucleoside 5'-phosphates.. In terms of biological role, bidirectionally degrades single-stranded DNA into large acid-insoluble oligonucleotides, which are then degraded further into small acid-soluble oligonucleotides. This Synechococcus sp. (strain JA-2-3B'a(2-13)) (Cyanobacteria bacterium Yellowstone B-Prime) protein is Exodeoxyribonuclease 7 small subunit.